Consider the following 347-residue polypeptide: DNA-directed RNA polymerase subunit alpha (347 aa).

The alpha N-terminal domain (alpha-NTD) stretch occupies residues 1–230 (MFKGFQKPKR…DHMTIFINFE (230 aa)). The interval 247-347 (MNEVLNRSVE…EDDGQDQIGE (101 aa)) is alpha C-terminal domain (alpha-CTD). Positions 320-347 (GRLVAPPPSAGGGPDFGPEDDGQDQIGE) are disordered. The span at 336-347 (GPEDDGQDQIGE) shows a compositional bias: acidic residues.

This sequence belongs to the RNA polymerase alpha chain family. In terms of assembly, homodimer. The RNAP catalytic core consists of 2 alpha, 1 beta, 1 beta' and 1 omega subunit. When a sigma factor is associated with the core the holoenzyme is formed, which can initiate transcription.

It carries out the reaction RNA(n) + a ribonucleoside 5'-triphosphate = RNA(n+1) + diphosphate. Functionally, DNA-dependent RNA polymerase catalyzes the transcription of DNA into RNA using the four ribonucleoside triphosphates as substrates. This chain is DNA-directed RNA polymerase subunit alpha, found in Solibacter usitatus (strain Ellin6076).